A 1464-amino-acid chain; its full sequence is Glutamate receptor ionotropic, NMDA 2A (1464 aa).

Residues 1–22 (MGRVGYWTLLVLPALLVWRGPA) form the signal peptide. Residues 23–556 (PSAAAEKGPP…SAFLEPFSAS (534 aa)) are Extracellular-facing. Histidine 44 provides a ligand contact to Zn(2+). A glycan (N-linked (GlcNAc...) asparagine) is linked at asparagine 75. A disulfide bridge connects residues cysteine 87 and cysteine 320. Histidine 128, glutamate 266, and aspartate 282 together coordinate Zn(2+). Asparagine 340, asparagine 380, asparagine 443, and asparagine 444 each carry an N-linked (GlcNAc...) asparagine glycan. Intrachain disulfides connect cysteine 429-cysteine 455 and cysteine 436-cysteine 456. L-glutamate contacts are provided by serine 511, threonine 513, and arginine 518. An N-linked (GlcNAc...) asparagine glycan is attached at asparagine 541. A helical membrane pass occupies residues 557 to 576 (VWVMMFVMLLIVSAIAVFVF). Topologically, residues 577-600 (EYFSPVGYNRNLAKGKAPHGPSFT) are cytoplasmic. Residues 599–620 (FTIGKAIWLLWGLVFNNSVPVQ) form a pore-forming region. An intramembrane region (discontinuously helical) is located at residues 601–615 (IGKAIWLLWGLVFNN). Over 616-625 (SVPVQNPKGT) the chain is Cytoplasmic. Residues 626-646 (TSKIMVSVWAFFAVIFLASYT) form a helical membrane-spanning segment. Topologically, residues 647 to 814 (ANLAAFMIQE…NEVMSSQLDI (168 aa)) are extracellular. N-linked (GlcNAc...) asparagine glycosylation occurs at asparagine 687. L-glutamate contacts are provided by serine 689, threonine 690, and aspartate 731. Cysteine 745 and cysteine 800 are joined by a disulfide. Residues 815–835 (DNMAGVFYMLAAAMALSLITF) form a helical membrane-spanning segment. At 836-1464 (IWEHLFYWKL…KKMPSIESDV (629 aa)) the chain is on the cytoplasmic side. Residues serine 882, serine 890, and serine 929 each carry the phosphoserine modification. Polar residues-rich tracts occupy residues 1001–1010 (STESKVNSRP) and 1023–1032 (QDSLSQNPVS). Disordered stretches follow at residues 1001–1088 (STES…NFKR) and 1148–1180 (PDPY…GLSN). Phosphoserine is present on serine 1025. Basic and acidic residues-rich tracts occupy residues 1033 to 1043 (QRDEATAENRT) and 1052 to 1061 (LPEEMAHSDI). A phosphoserine mark is found at serine 1059 and serine 1062. Residues 1070–1087 (CHREPDNSKNPKTKDNFK) are compositionally biased toward basic and acidic residues. Polar residues predominate over residues 1165–1180 (LPMNRNPLQNEEGLSN). Phosphoserine occurs at positions 1198 and 1291. The tract at residues 1335–1372 (KLSGKKSSLFPQGLEDSKRSKSLLPDHTSDNPFLHSHR) is disordered. The PDZ-binding signature appears at 1462 to 1464 (SDV).

This sequence belongs to the glutamate-gated ion channel (TC 1.A.10.1) family. NR2A/GRIN2A subfamily. Heterotetramer. Forms heterotetrameric channels composed of two GluN1/zeta subunits (GRIN1), and two identical GluN2/epsilon subunits (GRIN2A, GRIN2B, GRIN2C or GRIN2D) or GluN3 subunits (GRIN3A or GRIN3B) (in vitro). Can also form heterotetrameric channels that contain at least two GluN1 subunits and at least two different GluN2 subunits (or a combination of one GluN2 and one GluN3 subunits) (in vitro). In vivo, the subunit composition may depend on the expression levels of the different subunits. Found in a complex with GRIN1, GRIN3A and PPP2CB. Found in a complex with GRIN1 and GRIN3B. Interacts with AIP1. Interacts with HIP1 and NETO1. Interacts with SNX27 (via PDZ domain); the interaction is required for recycling to the plasma membrane when endocytosed and prevent degradation in lysosomes. Interacts with PDZ domains of PATJ and DLG4. Interacts with LRFN2. Interacts with RPH3A and DLG4; this ternary complex regulates NMDA receptor composition at postsynaptic membranes. Interacts with SORCS2. Interacts with ARC; preventing ARC oligomerization. Interacts (via the extreme C-terminus) with FRMPD2 (the second PDZ domain); the interaction is direct and is likely to promote NMDAR-mediated neural signal transmission. GRIN2A binds FRMPD2 with lower affinity than GRIN2B.

It localises to the cell projection. The protein localises to the dendritic spine. Its subcellular location is the cell membrane. It is found in the synapse. The protein resides in the postsynaptic cell membrane. It localises to the cytoplasmic vesicle membrane. It carries out the reaction Ca(2+)(in) = Ca(2+)(out). The enzyme catalyses Na(+)(in) = Na(+)(out). It catalyses the reaction K(+)(in) = K(+)(out). In terms of biological role, component of N-methyl-D-aspartate (NMDA) receptors (NMDARs) that function as heterotetrameric, ligand-gated cation channels with high calcium permeability and voltage-dependent block by Mg(2+). NMDARs participate in synaptic plasticity for learning and memory formation by contributing to the slow phase of excitatory postsynaptic current, long-term synaptic potentiation, and learning. Channel activation requires binding of the neurotransmitter L-glutamate to the GluN2 subunit, glycine or D-serine binding to the GluN1 subunit, plus membrane depolarization to eliminate channel inhibition by Mg(2+). NMDARs mediate simultaneously the potasium efflux and the influx of calcium and sodium. Each GluN2 subunit confers differential attributes to channel properties, including activation, deactivation and desensitization kinetics, pH sensitivity, Ca2(+) permeability, and binding to allosteric modulators. Participates in the synaptic plasticity regulation through activation by the L-glutamate releaseed by BEST1, into the synaptic cleft, upon F2R/PAR-1 activation in astrocyte. The polypeptide is Glutamate receptor ionotropic, NMDA 2A (Pan troglodytes (Chimpanzee)).